A 3584-amino-acid chain; its full sequence is D-lysergyl-peptide-synthetase subunit 1 (3584 aa).

The disordered stretch occupies residues 25 to 44 (IESINGDKNKSERHTASSSA). Over residues 29-39 (NGDKNKSERHT) the composition is skewed to basic and acidic residues. Residues 307–706 (SCCSRPNSQA…LGRKDDQVKI (400 aa)) are adenylation (A) domain 1. The 70-residue stretch at 848 to 917 (REKLLQALFA…TLREIVIVST (70 aa)) folds into the Carrier 1 domain. The residue at position 880 (serine 880) is an O-(pantetheine 4'-phosphoryl)serine. Positions 962 to 1353 (EDIYPCTHLQ…EHILTQIHSN (392 aa)) are condensation (C) domain 1. The interval 1396–1803 (QAKCQAQPDA…RRKDAQVKIR (408 aa)) is adenylation (A) domain 2. Residues 1948–2016 (TEHEISAIWA…TIRKLALARG (69 aa)) form the Carrier 2 domain. Residue serine 1980 is modified to O-(pantetheine 4'-phosphoryl)serine. The condensation (C) domain 2 stretch occupies residues 2066–2483 (ERIYPCSPIQ…ALPVLDEDQM (418 aa)). The tract at residues 2508–2906 (QCIRCPDSPS…GRNDDQVKVR (399 aa)) is adenylation (A) domain 3. One can recognise a Carrier 3 domain in the interval 3041–3109 (MEAELQQLVG…RLSDLARIVE (69 aa)). At serine 3073 the chain carries O-(pantetheine 4'-phosphoryl)serine. Positions 3174-3472 (LYFSKPMASE…VAKSTTWSSD (299 aa)) are cyclization (Cyc) domain.

This sequence belongs to the NRP synthetase family.

The protein operates within alkaloid biosynthesis; ergot alkaloid biosynthesis. D-lysergyl-peptide-synthetase subunit 1; part of the gene cluster that mediates the biosynthesis of fungal ergot alkaloid. DmaW catalyzes the first step of ergot alkaloid biosynthesis by condensing dimethylallyl diphosphate (DMAP) and tryptophan to form 4-dimethylallyl-L-tryptophan. The second step is catalyzed by the methyltransferase easF that methylates 4-dimethylallyl-L-tryptophan in the presence of S-adenosyl-L-methionine, resulting in the formation of 4-dimethylallyl-L-abrine. The catalase easC and the FAD-dependent oxidoreductase easE then transform 4-dimethylallyl-L-abrine to chanoclavine-I which is further oxidized by easD in the presence of NAD(+), resulting in the formation of chanoclavine-I aldehyde. Agroclavine dehydrogenase easG then mediates the conversion of chanoclavine-I aldehyde to agroclavine via a non-enzymatic adduct reaction: the substrate is an iminium intermediate that is formed spontaneously from chanoclavine-I aldehyde in the presence of glutathione. The presence of easA is not required to complete this reaction. Further conversion of agroclavine to paspalic acid is a two-step process involving oxidation of agroclavine to elymoclavine and of elymoclavine to paspalic acid, the second step being performed by the elymoclavine oxidase cloA. Paspalic acid is then further converted to D-lysergic acid. Ergopeptines are assembled from D-lysergic acid and three different amino acids by the D-lysergyl-peptide-synthetases composed each of a monomudular and a trimodular nonribosomal peptide synthetase subunit. LpsB and lpsC encode the monomodular subunits responsible for D-lysergic acid activation and incorporation into the ergopeptine backbone. LpsA1 and A2 subunits encode the trimodular nonribosomal peptide synthetase assembling the tripeptide portion of ergopeptines. LpsA1 is responsible for formation of the major ergopeptine, ergotamine, and lpsA2 for alpha-ergocryptine, the minor ergopeptine of the total alkaloid mixture elaborated by C.purpurea. D-lysergyl-tripeptides are assembled by the nonribosomal peptide synthetases and released as N-(D-lysergyl-aminoacyl)-lactams. Cyclolization of the D-lysergyl-tripeptides is performed by the Fe(2+)/2-ketoglutarate-dependent dioxygenase easH which introduces a hydroxyl group into N-(D-lysergyl-aminoacyl)-lactam at alpha-C of the aminoacyl residue followed by spontaneous condensation with the terminal lactam carbonyl group. The protein is D-lysergyl-peptide-synthetase subunit 1 of Claviceps purpurea (strain 20.1) (Ergot fungus).